The sequence spans 147 residues: Putative nickel-responsive regulator (147 aa).

Ni(2+)-binding residues include His-76, His-87, His-89, and Cys-95.

It belongs to the transcriptional regulatory CopG/NikR family. It depends on Ni(2+) as a cofactor.

Functionally, transcriptional regulator. The polypeptide is Putative nickel-responsive regulator (Rhodopseudomonas palustris (strain TIE-1)).